A 348-amino-acid chain; its full sequence is Phosphoribosylformylglycinamidine cyclo-ligase (348 aa).

This sequence belongs to the AIR synthase family.

It is found in the cytoplasm. It carries out the reaction 2-formamido-N(1)-(5-O-phospho-beta-D-ribosyl)acetamidine + ATP = 5-amino-1-(5-phospho-beta-D-ribosyl)imidazole + ADP + phosphate + H(+). It participates in purine metabolism; IMP biosynthesis via de novo pathway; 5-amino-1-(5-phospho-D-ribosyl)imidazole from N(2)-formyl-N(1)-(5-phospho-D-ribosyl)glycinamide: step 2/2. The sequence is that of Phosphoribosylformylglycinamidine cyclo-ligase from Ruegeria sp. (strain TM1040) (Silicibacter sp.).